We begin with the raw amino-acid sequence, 72 residues long: Protein CYSTEINE-RICH TRANSMEMBRANE MODULE 9 (72 aa).

Polar residues predominate over residues 1–22; it reads MNPSEQNHLSVEKPSQTSSGPY. The segment at 1 to 46 is disordered; sequence MNPSEQNHLSVEKPSQTSSGPYTSPPPIGYPTRDAMVGDPPAAAVE. Residues 49–65 form a helical membrane-spanning segment; it reads SKGDGFWKGCCAAICCC.

It belongs to the CYSTM1 family. In terms of assembly, heterodimers. Interacts with WIH1/CYSTM13. Mostly expressed in roots and flowers and, to a lower extent, in stems, siliques and leaves.

The protein localises to the cell membrane. The protein resides in the nucleus. In terms of biological role, involved in resistance to abiotic stress. The sequence is that of Protein CYSTEINE-RICH TRANSMEMBRANE MODULE 9 from Arabidopsis thaliana (Mouse-ear cress).